A 515-amino-acid chain; its full sequence is BURP domain-containing protein 9 (515 aa).

A signal peptide spans 1 to 29 (MKATGGPLPLILFLLIIIVLITAQHTAIA). The region spanning 292–507 (YFFEDNLAPG…GRGSIIWVPV (216 aa)) is the BURP domain. N-linked (GlcNAc...) asparagine glycosylation is found at N321, N332, and N470.

As to expression, expressed in shoot and panicles.

This Oryza sativa subsp. japonica (Rice) protein is BURP domain-containing protein 9 (BURP9).